Reading from the N-terminus, the 1280-residue chain is Dynactin subunit 1 (1280 aa).

The disordered stretch occupies residues 1–26 (MAQSKRHMYNRTPSGSRMSTEASARP). A compositionally biased stretch (polar residues) spans 11–22 (RTPSGSRMSTEA). Positions 48 to 90 (GATLFATGKWVGVILDEAKGKNDGTVQGRKYFTCDEGHGIFVR) constitute a CAP-Gly domain. Residues 99–223 (DGADTTSPET…SKEEEGLRDQ (125 aa)) form a disordered region. Over residues 102–114 (DTTSPETPDSSAS) the composition is skewed to polar residues. Threonine 108, threonine 145, threonine 146, and threonine 147 each carry phosphothreonine. Basic residues predominate over residues 129–152 (SKLRGLKPKKAPTARKTTTRRPKP). The span at 161 to 205 (AGPSSSLGPSGSASAGELSSSEPSTPAQTPLAAPIIPTPALTSPG) shows a compositional bias: low complexity. Serine 179 is modified (phosphoserine; by PLK1). Phosphoserine; by CDK1 is present on serine 212. Residues 214 to 223 (SKEEEGLRDQ) are compositionally biased toward basic and acidic residues. Coiled coils occupy residues 214 to 513 (SKEE…ADYQ) and 942 to 1048 (LKLE…EGLR). The interaction with HPS6 stretch occupies residues 910–1280 (EYDAERPPSK…LHQLHGRLIS (371 aa)). The disordered stretch occupies residues 1064 to 1089 (GEEQQRGGTPGQAPGALPGPGPVKDS). Positions 1184–1213 (SAQLMEQVAQLKSLSDTIEKLKDEVLKETV) form a coiled coil.

This sequence belongs to the dynactin 150 kDa subunit family. As to quaternary structure, monomer and homodimer. Subunit of dynactin, a multiprotein complex part of a tripartite complex with dynein and a adapter, such as BICDL1, BICD2 or HOOK3. The dynactin complex is built around ACTR1A/ACTB filament and consists of an actin-related filament composed of a shoulder domain, a pointed end and a barbed end. Its length is defined by its flexible shoulder domain. The soulder is composed of 2 DCTN1 subunits, 4 DCTN2 and 2 DCTN3. DCTN1/p150(glued) binds directly to microtubules and to cytoplasmic dynein. The 4 DCNT2 (via N-terminus) bind the ACTR1A filament and act as molecular rulers to determine the length. The pointed end is important for binding dynein-dynactin cargo adapters. Consists of 4 subunits: ACTR10, DCNT4, DCTN5 and DCTN6. The barbed end is composed of a CAPZA1:CAPZB heterodimers, which binds ACTR1A/ACTB filament and dynactin and stabilizes dynactin. Interacts with the C-terminus of MAPRE1, MAPRE2 and MAPRE3. Interacts (via C-terminus) with SNX6. Interacts with CLN3, DYNAP, ECPAS and FBXL5. Interacts with MISP; this interaction regulates its distribution at the cell cortex. Interacts with CEP131. Interacts with CEP126. Interacts with CLIP1. Interacts with dynein intermediate chain and dynein heavy chain. Interacts with PLK1 (via POLO-box domain). Interacts with TBCB. Binds preferentially to tyrosinated microtubules than to detyrosinated microtubules. Interacts with PARD6A. Interacts with HPS6. Interacts with KIF3A. Interacts with BICD2. Interacts with DST (isoform 9). Interacts with DST (isoform 1). Identified in a complex with MREG and RILP. Interacts with BCCIP (isoform 2/alpha). Interacts with DCDC1. Interacts with AKNA. Interacts with DYNC1I2. Interacts with RUFY3 and RUFY4. Ubiquitinated by a SCF complex containing FBXL5, leading to its degradation by the proteasome. Post-translationally, phosphorylation by SLK at Thr-145, Thr-146 and Thr-147 targets DCTN1 to the centrosome. It is uncertain if SLK phosphorylates all three threonines or one or two of them. PLK1-mediated phosphorylation at Ser-179 is essential for its localization in the nuclear envelope and promotes its dissociation from microtubules during early mitosis and positively regulates nuclear envelope breakdown during prophase. In terms of tissue distribution, ubiquitous with a high level expression observed in the brain (at protein level).

The protein resides in the cytoplasm. It is found in the cytoskeleton. It localises to the microtubule organizing center. The protein localises to the centrosome. Its subcellular location is the centriole. The protein resides in the spindle. It is found in the nucleus envelope. It localises to the cell cortex. Functionally, part of the dynactin complex that activates the molecular motor dynein for ultra-processive transport along microtubules. Plays a key role in dynein-mediated retrograde transport of vesicles and organelles along microtubules by recruiting and tethering dynein to microtubules. Binds to both dynein and microtubules providing a link between specific cargos, microtubules and dynein. Essential for targeting dynein to microtubule plus ends, recruiting dynein to membranous cargos and enhancing dynein processivity (the ability to move along a microtubule for a long distance without falling off the track). Can also act as a brake to slow the dynein motor during motility along the microtubule. Can regulate microtubule stability by promoting microtubule formation, nucleation and polymerization and by inhibiting microtubule catastrophe in neurons. Inhibits microtubule catastrophe by binding both to microtubules and to tubulin, leading to enhanced microtubule stability along the axon. Plays a role in metaphase spindle orientation. Plays a role in centriole cohesion and subdistal appendage organization and function. Its recruitment to the centriole in a KIF3A-dependent manner is essential for the maintenance of centriole cohesion and the formation of subdistal appendage. Also required for microtubule anchoring at the mother centriole. Plays a role in primary cilia formation. This Rattus norvegicus (Rat) protein is Dynactin subunit 1 (Dctn1).